The chain runs to 503 residues: Protein ERGIC-53-like (503 aa).

A signal peptide spans 1-25 (MLKTGGLSPSLCLLSLLLALHSAER). The Lumenal segment spans residues 26–439 (SYPPPQRRFE…WLPGFSTCLR (414 aa)). Residues 32–253 (RRFEYKLSFK…DVLSFLTFSL (222 aa)) form the L-type lectin-like domain. Cysteines 177 and 216 form a disulfide. Residues 440-460 (TSIFLFFLLIQTVGFFCYMNF) form a helical membrane-spanning segment. Residues 461-503 (RQELDKRLQEYLFTESISLQPALPIPRTIGVLRRQPVSPSMQA) lie on the Cytoplasmic side of the membrane.

As to expression, predominantly expressed in the sublingual salivary gland, in the mucous cells of the acini, but not in the serous cells, nor in the duct system (at protein level). Not detected in the submandilar, nor the parotid glands. Expressed in the mucous glands, but not detected in the serous glands (at protein level). Besides the salivary glands, expressed in the Brunner's glands in the duodenum, but no other mucous or serous glands (at protein level).

The protein resides in the endoplasmic reticulum-Golgi intermediate compartment membrane. The protein is Protein ERGIC-53-like (Lman1l) of Rattus norvegicus (Rat).